The following is a 443-amino-acid chain: MRTAPRSQLNRAIAPCRKRGPRRVAMVSMHTSPLEQPGTGDAGGMNVYVLQTARRLADRGVAVEIFTRATSSEQPPALSPSEGITVHYVPAGPFEGLSKGDLPSQLCAFTNGVLRAEAAQPPGYFDVIHSHYWLSGQAAWLAAERWGVPHIHSAHTLAKVKNLHLAAEDTPEPFTRVVGEEQVVAESDALVTNTSSEAEVLVDLYRADPDKVTVTPPGVDPEVFTPGDKLAARRRLGLPDDALVLGFAGRIQPLKAPDVLVRAVARLRALNPELAPRLRLVVVGGPSGNGADNPRWLHDLAAELGIADAVTFLKPRAGHELAEVFRACDVVGVPSYNETFGLVALEAQACGTPVVAAAVGGLTTAVADGHSGLLIRGHDETDWANALDKLVTDAPRRARLAAGALDHAARFTWSHTADDLLGAYGDAIQRRAVSPRRSPASKR.

His-30 contributes to the 1D-myo-inositol 3-phosphate binding site. UDP-N-acetyl-alpha-D-glucosamine-binding positions include 36 to 37 and Gly-44; that span reads QP. Residues 41–46, Lys-99, Tyr-132, Thr-156, and Arg-176 contribute to the 1D-myo-inositol 3-phosphate site; that span reads DAGGMN. The UDP-N-acetyl-alpha-D-glucosamine site is built by Arg-250, Lys-255, and Arg-316. Positions 325, 326, and 328 each coordinate Mg(2+). Positions 338 and 346 each coordinate UDP-N-acetyl-alpha-D-glucosamine. Position 352 (Thr-352) interacts with Mg(2+).

This sequence belongs to the glycosyltransferase group 1 family. MshA subfamily. In terms of assembly, homodimer.

The enzyme catalyses 1D-myo-inositol 3-phosphate + UDP-N-acetyl-alpha-D-glucosamine = 1D-myo-inositol 2-acetamido-2-deoxy-alpha-D-glucopyranoside 3-phosphate + UDP + H(+). In terms of biological role, catalyzes the transfer of a N-acetyl-glucosamine moiety to 1D-myo-inositol 3-phosphate to produce 1D-myo-inositol 2-acetamido-2-deoxy-glucopyranoside 3-phosphate in the mycothiol biosynthesis pathway. This is D-inositol 3-phosphate glycosyltransferase from Stackebrandtia nassauensis (strain DSM 44728 / CIP 108903 / NRRL B-16338 / NBRC 102104 / LLR-40K-21).